The following is a 427-amino-acid chain: Enolase (427 aa).

Residue Gln164 coordinates (2R)-2-phosphoglycerate. Glu206 serves as the catalytic Proton donor. Mg(2+) contacts are provided by Asp243, Glu284, and Asp311. (2R)-2-phosphoglycerate-binding residues include Lys336, Arg365, Ser366, and Lys387. Lys336 acts as the Proton acceptor in catalysis.

This sequence belongs to the enolase family. Requires Mg(2+) as cofactor.

Its subcellular location is the cytoplasm. It localises to the secreted. It is found in the cell surface. It catalyses the reaction (2R)-2-phosphoglycerate = phosphoenolpyruvate + H2O. It participates in carbohydrate degradation; glycolysis; pyruvate from D-glyceraldehyde 3-phosphate: step 4/5. Catalyzes the reversible conversion of 2-phosphoglycerate (2-PG) into phosphoenolpyruvate (PEP). It is essential for the degradation of carbohydrates via glycolysis. The polypeptide is Enolase (Synechococcus sp. (strain JA-2-3B'a(2-13)) (Cyanobacteria bacterium Yellowstone B-Prime)).